The primary structure comprises 315 residues: Probable NAD(P)H-dependent D-xylose reductase xyl1 (315 aa).

The Proton donor role is filled by Tyr-50. Residue His-112 participates in substrate binding. NAD(+) is bound by residues 166-167, 215-224, and 271-281; these read SN, SSFGPLSFVE, and KSNDPTRLAQN.

Belongs to the aldo/keto reductase family.

It carries out the reaction xylitol + NAD(+) = D-xylose + NADH + H(+). The catalysed reaction is xylitol + NADP(+) = D-xylose + NADPH + H(+). It functions in the pathway carbohydrate metabolism; D-xylose degradation. Catalyzes the initial reaction in the xylose utilization pathway by reducing D-xylose into xylitol. Xylose is a major component of hemicelluloses such as xylan. Most fungi utilize D-xylose via three enzymatic reactions, xylose reductase (XR), xylitol dehydrogenase (XDH), and xylulokinase, to form xylulose 5-phosphate, which enters pentose phosphate pathway. This chain is Probable NAD(P)H-dependent D-xylose reductase xyl1 (xyl1), found in Aspergillus fumigatus (strain ATCC MYA-4609 / CBS 101355 / FGSC A1100 / Af293) (Neosartorya fumigata).